Reading from the N-terminus, the 833-residue chain is Leucine--tRNA ligase (833 aa).

The short motif at 41–52 (PYPSGAGLHVGH) is the 'HIGH' region element. Positions 610–614 (KMSKS) match the 'KMSKS' region motif. Lys-613 provides a ligand contact to ATP.

The protein belongs to the class-I aminoacyl-tRNA synthetase family.

It is found in the cytoplasm. The catalysed reaction is tRNA(Leu) + L-leucine + ATP = L-leucyl-tRNA(Leu) + AMP + diphosphate. The chain is Leucine--tRNA ligase from Streptococcus pyogenes serotype M49 (strain NZ131).